A 447-amino-acid polypeptide reads, in one-letter code: Trigger factor (447 aa).

The PPIase FKBP-type domain maps to 164–249; sequence GNQVTFDFEG…VKLVEKSKLP (86 aa).

It belongs to the FKBP-type PPIase family. Tig subfamily.

Its subcellular location is the cytoplasm. It carries out the reaction [protein]-peptidylproline (omega=180) = [protein]-peptidylproline (omega=0). Involved in protein export. Acts as a chaperone by maintaining the newly synthesized protein in an open conformation. Functions as a peptidyl-prolyl cis-trans isomerase. This Psychrobacter arcticus (strain DSM 17307 / VKM B-2377 / 273-4) protein is Trigger factor.